The following is a 319-amino-acid chain: Acetyl-coenzyme A carboxylase carboxyl transferase subunit alpha (319 aa).

Residues 38-292 (ALDKKAADLL…GKAIASMLAG (255 aa)) enclose the CoA carboxyltransferase C-terminal domain.

It belongs to the AccA family. As to quaternary structure, acetyl-CoA carboxylase is a heterohexamer composed of biotin carboxyl carrier protein (AccB), biotin carboxylase (AccC) and two subunits each of ACCase subunit alpha (AccA) and ACCase subunit beta (AccD).

Its subcellular location is the cytoplasm. The enzyme catalyses N(6)-carboxybiotinyl-L-lysyl-[protein] + acetyl-CoA = N(6)-biotinyl-L-lysyl-[protein] + malonyl-CoA. It participates in lipid metabolism; malonyl-CoA biosynthesis; malonyl-CoA from acetyl-CoA: step 1/1. Component of the acetyl coenzyme A carboxylase (ACC) complex. First, biotin carboxylase catalyzes the carboxylation of biotin on its carrier protein (BCCP) and then the CO(2) group is transferred by the carboxyltransferase to acetyl-CoA to form malonyl-CoA. The polypeptide is Acetyl-coenzyme A carboxylase carboxyl transferase subunit alpha (Jannaschia sp. (strain CCS1)).